The primary structure comprises 585 residues: Dihydroxy-acid dehydratase, mitochondrial (585 aa).

The N-terminal 20 residues, 1–20, are a transit peptide targeting the mitochondrion; the sequence is MGLLTKVATSRQFSTTRCVA. Cys-70 provides a ligand contact to [2Fe-2S] cluster. Position 102 (Asp-102) interacts with Mg(2+). Cys-143 serves as a coordination point for [2Fe-2S] cluster. Residue Asp-144 participates in Mg(2+) binding. Position 221 (Cys-221) interacts with [2Fe-2S] cluster. Glu-474 provides a ligand contact to Mg(2+). The active-site Proton acceptor is Ser-500.

Belongs to the IlvD/Edd family. [2Fe-2S] cluster is required as a cofactor. It depends on Mg(2+) as a cofactor.

The protein resides in the mitochondrion. The enzyme catalyses (2R)-2,3-dihydroxy-3-methylbutanoate = 3-methyl-2-oxobutanoate + H2O. It catalyses the reaction (2R,3R)-2,3-dihydroxy-3-methylpentanoate = (S)-3-methyl-2-oxopentanoate + H2O. Its pathway is amino-acid biosynthesis; L-isoleucine biosynthesis; L-isoleucine from 2-oxobutanoate: step 3/4. It participates in amino-acid biosynthesis; L-valine biosynthesis; L-valine from pyruvate: step 3/4. With respect to regulation, catalytic activity is inactivated under iron-limiting conditions. In terms of biological role, dihydroxyacid dehydratase that catalyzes the third step in the common pathway leading to biosynthesis of branched-chain amino acids. Catalyzes the dehydration of (2R,3R)-2,3-dihydroxy-3-methylpentanoate (2,3-dihydroxy-3-methylvalerate) into 2-oxo-3-methylpentanoate (2-oxo-3-methylvalerate) and of (2R)-2,3-dihydroxy-3-methylbutanoate (2,3-dihydroxyisovalerate) into 2-oxo-3-methylbutanoate (2-oxoisovalerate), the penultimate precursor to L-isoleucine and L-valine, respectively. Required for the synthesis of alpha-isopropylmalate which modulates the activity of LEU3 and subsequently regulates the expression of LEU1. This is Dihydroxy-acid dehydratase, mitochondrial from Saccharomyces cerevisiae (strain ATCC 204508 / S288c) (Baker's yeast).